The primary structure comprises 396 residues: Subtilisin-like protease 5 (396 aa).

Positions 1–20 are cleaved as a signal peptide; sequence MTGFFTILSFSLAALSVTNA. A propeptide spanning residues 21 to 116 is cleaved from the precursor; sequence AQILSVPKGA…VEPDAIISQH (96 aa). Residues 37–113 form the Inhibitor I9 domain; it reads YIVVMKDDTS…VAFVEPDAII (77 aa). Residues 125-396 form the Peptidase S8 domain; it reads PWGLSRLSNR…SRLLYNGSGR (272 aa). Catalysis depends on charge relay system residues Asp-156 and His-187. 2 N-linked (GlcNAc...) asparagine glycosylation sites follow: Asn-230 and Asn-248. Ser-342 acts as the Charge relay system in catalysis. Positions 376-389 are enriched in polar residues; the sequence is PTIRNPGPDTTSRL. The interval 376–396 is disordered; that stretch reads PTIRNPGPDTTSRLLYNGSGR. Asn-392 carries N-linked (GlcNAc...) asparagine glycosylation.

The protein belongs to the peptidase S8 family.

It localises to the secreted. In terms of biological role, secreted subtilisin-like serine protease with keratinolytic activity that contributes to pathogenicity. This Arthroderma benhamiae (strain ATCC MYA-4681 / CBS 112371) (Trichophyton mentagrophytes) protein is Subtilisin-like protease 5 (SUB5).